Consider the following 391-residue polypeptide: Thyroid hormone receptor alpha-B (391 aa).

The interval 1 to 32 is modulating; that stretch reads MAQWPEKEEEEQPMFGEEYTGYIPSYLEKDEP. NR C4-type zinc fingers lie at residues 33–53 and 71–95; these read CVVC…CEGC and CKYD…FKKC. The segment at residues 33–100 is a DNA-binding region (nuclear receptor); sequence CVVCGDKATG…RFKKCIAVGM (68 aa). Positions 143–388 constitute an NR LBD domain; the sequence is AEWELIRMVT…PPLFLEVFED (246 aa).

This sequence belongs to the nuclear hormone receptor family. NR1 subfamily.

It localises to the nucleus. High affinity receptor for triiodothyronine. The polypeptide is Thyroid hormone receptor alpha-B (thra2) (Paralichthys olivaceus (Bastard halibut)).